A 596-amino-acid polypeptide reads, in one-letter code: Bromodomain-containing protein 9 (596 aa).

Residues 1–10 show a composition bias toward basic residues; sequence MGKKHKKHKA. Disordered regions lie at residues 1–26 and 38–137; these read MGKKHKKHKAEWRSSYEDYTDTPLEK and EVTE…AENE. Over residues 50–62 the composition is skewed to basic and acidic residues; that stretch reads SYYDDRSDHERER. Ser56 is subject to Phosphoserine. Basic residues predominate over residues 63 to 73; sequence HREKKKKKKKK. Residues 74-85 show a composition bias toward basic and acidic residues; the sequence is SEKEKHLDEEER. Over residues 86–97 the composition is skewed to basic residues; it reads RKRKEEKKRKRE. Residues 111–126 show a composition bias toward basic and acidic residues; it reads DPGKKVEVEPPPDRPV. The region spanning 136-240 is the Bromo domain; sequence NESTPIQRLL…HAGFKMMSKA (105 aa). The tract at residues 214-216 is histone H4K5ac H4K8ac and histone H4K5bu H4K8bu binding; sequence TYN. The residue at position 372 (Lys372) is an N6-acetyllysine; alternate. Residue Lys372 forms a Glycyl lysine isopeptide (Lys-Gly) (interchain with G-Cter in SUMO2); alternate linkage. The interval 536–596 is disordered; it reads AQAERGGSRP…SPEPAAPAKN (61 aa). Low complexity predominate over residues 543-555; it reads SRPSSNLSSLSTA. 2 positions are modified to phosphoserine: Ser565 and Ser587.

In terms of assembly, binds acetylated histones H3 and H4. Binds butyrylated histone H4. Component of the multiprotein chromatin-remodeling subcomplex SWI/SNF called GBAF, which includes at least BICRA or BICRAL (mutually exclusive), BRD9, SS18, the core BAF subunits, SMARCA2/BRM, SMARCA4/BRG1/BAF190A, ACTL6A/BAF53, SMARCC1/BAF155, and SMARCD1/BAF60A. Interacts (via N-terminal bromodomain) with acetylated RAD54. Interacts (via C-terminus) with RAD51.

It localises to the nucleus. In terms of biological role, plays a role in chromatin remodeling and regulation of transcription. Acts as a chromatin reader that recognizes and binds acylated histones: binds histones that are acetylated and/or butyrylated. Component of SWI/SNF chromatin remodeling subcomplex GBAF that carries out key enzymatic activities, changing chromatin structure by altering DNA-histone contacts within a nucleosome in an ATP-dependent manner. Also orchestrates the RAD51-RAD54 complex formation and thereby plays a role in homologous recombination (HR). This Mus musculus (Mouse) protein is Bromodomain-containing protein 9 (Brd9).